A 724-amino-acid polypeptide reads, in one-letter code: Probable ATP-dependent RNA helicase DDX4 (724 aa).

The segment covering 1-11 (MSGQEDWESEI) has biased composition (acidic residues). 2 disordered regions span residues 1–25 (MSGQ…SNSE) and 37–241 (SSNN…QGPR). Residues 108 to 130 (SNGKQESGDFTNDDNRTIDDNRR) are compositionally biased toward basic and acidic residues. Polar residues predominate over residues 168–182 (EQSGFTSNDGFNNET). A Q motif motif is present at residues 286–314 (LTFEEANLCDSLAKNVCKSGYVKLTPIQK). The 184-residue stretch at 317 to 500 (IPIIVAGRDL…REILKPDYLF (184 aa)) folds into the Helicase ATP-binding domain. 330-337 (AQTGSGKT) is an ATP binding site. The DEAD box signature appears at 444 to 447 (DEAD). A Helicase C-terminal domain is found at 512–675 (DVEQMVIEVD…EVPAWLEEVA (164 aa)). The segment covering 683–692 (AYNPRSNKFA) has biased composition (polar residues). The interval 683–724 (AYNPRSNKFASTDDRKRGDSRGDYSTSGFSPSAAQAEEEDWG) is disordered. The span at 693 to 704 (STDDRKRGDSRG) shows a compositional bias: basic and acidic residues. Over residues 705–715 (DYSTSGFSPSA) the composition is skewed to polar residues.

Belongs to the DEAD box helicase family. DDX4/VASA subfamily.

It localises to the cytoplasm. The catalysed reaction is ATP + H2O = ADP + phosphate + H(+). Functionally, probable ATP-dependent RNA helicase required during spermatogenesis to repress transposable elements and preventing their mobilization, which is essential for the germline integrity. Acts via the piRNA metabolic process, which mediates the repression of transposable elements during meiosis by forming complexes composed of piRNAs and Piwi proteins and governs the methylation and subsequent repression of transposons. Involved in the secondary piRNAs metabolic process, the production of piRNAs in fetal male germ cells through a ping-pong amplification cycle. In Pelophylax lessonae (Pool frog), this protein is Probable ATP-dependent RNA helicase DDX4.